The primary structure comprises 1172 residues: DNA-directed RNA polymerase subunit beta (1172 aa).

This sequence belongs to the RNA polymerase beta chain family. In terms of assembly, the RNAP catalytic core consists of 2 alpha, 1 beta, 1 beta' and 1 omega subunit. When a sigma factor is associated with the core the holoenzyme is formed, which can initiate transcription.

The catalysed reaction is RNA(n) + a ribonucleoside 5'-triphosphate = RNA(n+1) + diphosphate. Functionally, DNA-dependent RNA polymerase catalyzes the transcription of DNA into RNA using the four ribonucleoside triphosphates as substrates. The chain is DNA-directed RNA polymerase subunit beta from Pseudothermotoga lettingae (strain ATCC BAA-301 / DSM 14385 / NBRC 107922 / TMO) (Thermotoga lettingae).